The sequence spans 115 residues: Iron-sulfur cluster insertion protein ErpA (115 aa).

Iron-sulfur cluster is bound by residues Cys-43, Cys-107, and Cys-109.

This sequence belongs to the HesB/IscA family. Homodimer. Iron-sulfur cluster is required as a cofactor.

Its function is as follows. Required for insertion of 4Fe-4S clusters for at least IspG. The chain is Iron-sulfur cluster insertion protein ErpA from Photorhabdus laumondii subsp. laumondii (strain DSM 15139 / CIP 105565 / TT01) (Photorhabdus luminescens subsp. laumondii).